Consider the following 181-residue polypeptide: HGPRTase-like protein 2 (181 aa).

It belongs to the purine/pyrimidine phosphoribosyltransferase family. Archaeal HPRT subfamily.

Its function is as follows. May catalyze a purine salvage reaction, the substrate is unknown. This Haloferax volcanii (strain ATCC 29605 / DSM 3757 / JCM 8879 / NBRC 14742 / NCIMB 2012 / VKM B-1768 / DS2) (Halobacterium volcanii) protein is HGPRTase-like protein 2.